A 133-amino-acid polypeptide reads, in one-letter code: Putative biopolymer transport protein ExbD-like 2 (133 aa).

At 1–9 (MKKVESMNV) the chain is on the cytoplasmic side. A helical transmembrane segment spans residues 10–30 (VPFIDIMLVLLVIVLTTASFV). The Periplasmic portion of the chain corresponds to 31 to 133 (QTSKLPISIP…LVEDKKNQKN (103 aa)).

Belongs to the ExbD/TolR family.

The protein resides in the cell inner membrane. The sequence is that of Putative biopolymer transport protein ExbD-like 2 from Helicobacter pylori (strain J99 / ATCC 700824) (Campylobacter pylori J99).